Here is a 118-residue protein sequence, read N- to C-terminus: Large ribosomal subunit protein bL19 (118 aa).

The protein belongs to the bacterial ribosomal protein bL19 family.

Its function is as follows. This protein is located at the 30S-50S ribosomal subunit interface and may play a role in the structure and function of the aminoacyl-tRNA binding site. The polypeptide is Large ribosomal subunit protein bL19 (Citrifermentans bemidjiense (strain ATCC BAA-1014 / DSM 16622 / JCM 12645 / Bem) (Geobacter bemidjiensis)).